Consider the following 440-residue polypeptide: T-box transcription factor TBX20 (440 aa).

The segment at residues 103–282 is a DNA-binding region (T-box); it reads LWDKFHDLGT…SNPFAKGFRD (180 aa).

The protein resides in the nucleus. Transcriptional regulator that may be involved in heart developmental processes. The polypeptide is T-box transcription factor TBX20 (tbx20) (Xenopus tropicalis (Western clawed frog)).